A 675-amino-acid polypeptide reads, in one-letter code: Dihydrolipoyllysine-residue acetyltransferase component of pyruvate dehydrogenase complex (675 aa).

The 76-residue stretch at 2 to 77 (AFSVEMPELG…DVGGVIAIIG (76 aa)) folds into the Lipoyl-binding 1 domain. Residue lysine 43 is modified to N6-lipoyllysine. A disordered region spans residues 77-124 (GDADETPANEAPADEAPAPAEEEEPVKEEPKKEAAPEAPAATGAATDV). 2 stretches are compositionally biased toward low complexity: residues 84–95 (ANEAPADEAPAP) and 112–124 (PEAP…ATDV). The Lipoyl-binding 2 domain maps to 121 to 196 (ATDVEMPELG…DVGAVIARIG (76 aa)). At lysine 162 the chain carries N6-lipoyllysine. The disordered stretch occupies residues 200 to 240 (AAAAPAEEEAAPAEEEEPVKEEPKKEAAPEAPAATGAATDV). The segment covering 205 to 218 (AEEEAAPAEEEEPV) has biased composition (acidic residues). One can recognise a Lipoyl-binding 3 domain in the interval 237 to 312 (ATDVEMPELG…DVGAVIARIG (76 aa)). Lysine 278 carries the post-translational modification N6-lipoyllysine. Positions 316–368 (AAAAPAEEEAAPAEEEEPVKEEPKKEEPKKEEPKKEAATTPAAASATVSASGD) are disordered. The span at 321–334 (AEEEAAPAEEEEPV) shows a compositional bias: acidic residues. A compositionally biased stretch (basic and acidic residues) spans 335–352 (KEEPKKEEPKKEEPKKEA). Over residues 353–366 (ATTPAAASATVSAS) the composition is skewed to low complexity. A Peripheral subunit-binding (PSBD) domain is found at 372–409 (YVTPLVRKLAEKHGVDLNTVTGTGIGGRIRKQDVLAAA). Residues histidine 645 and aspartate 649 contribute to the active site.

It belongs to the 2-oxoacid dehydrogenase family. In terms of assembly, forms a 24-polypeptide structural core with octahedral symmetry. Part of an unusual ODH/PDH supercomplex, consisting of AceE (E1), AceF (E2), and Lpd (E3) together with OdhA (E1+E2). Requires (R)-lipoate as cofactor.

The enzyme catalyses N(6)-[(R)-dihydrolipoyl]-L-lysyl-[protein] + acetyl-CoA = N(6)-[(R)-S(8)-acetyldihydrolipoyl]-L-lysyl-[protein] + CoA. Its function is as follows. Is essential for both 2-oxoglutarate dehydrogenase (ODH) and pyruvate dehydrogenase (PDH) activities, but AceF has exclusively transacetylase (and no transsuccinylase) activity. The lipoyl residues required for ODH activity are likely provided by AceF. This chain is Dihydrolipoyllysine-residue acetyltransferase component of pyruvate dehydrogenase complex (aceF), found in Corynebacterium glutamicum (strain ATCC 13032 / DSM 20300 / JCM 1318 / BCRC 11384 / CCUG 27702 / LMG 3730 / NBRC 12168 / NCIMB 10025 / NRRL B-2784 / 534).